The primary structure comprises 154 residues: Myoglobin (154 aa).

The region spanning Gly2–Lys148 is the Globin domain. A Phosphoserine modification is found at Ser4. His65 is a nitrite binding site. His65 is a binding site for O2. Thr68 is modified (phosphothreonine). Residue His94 participates in heme b binding.

Belongs to the globin family. As to quaternary structure, monomeric.

It localises to the cytoplasm. The protein resides in the sarcoplasm. It catalyses the reaction Fe(III)-heme b-[protein] + nitric oxide + H2O = Fe(II)-heme b-[protein] + nitrite + 2 H(+). The catalysed reaction is H2O2 + AH2 = A + 2 H2O. Functionally, monomeric heme protein which primary function is to store oxygen and facilitate its diffusion within muscle tissues. Reversibly binds oxygen through a pentacoordinated heme iron and enables its timely and efficient release as needed during periods of heightened demand. Depending on the oxidative conditions of tissues and cells, and in addition to its ability to bind oxygen, it also has a nitrite reductase activity whereby it regulates the production of bioactive nitric oxide. Under stress conditions, like hypoxia and anoxia, it also protects cells against reactive oxygen species thanks to its pseudoperoxidase activity. This Ornithorhynchus anatinus (Duckbill platypus) protein is Myoglobin (MB).